We begin with the raw amino-acid sequence, 728 residues long: Phomopsene synthase (728 aa).

Positions 1–327 are terpene cyclase; the sequence is MEYRYSYVID…PRYHSDQSLD (327 aa). Residues D94 and D98 each contribute to the Mg(2+) site. Residues D94, D98, 181–184, N226, 230–234, and 319–320 each bind substrate; these read RIVD, SWEKE, and RY. Residues 94–98 carry the DDXXD 1 motif; that stretch reads DDLVD. Residues 226–234 carry the NSE/DTE motif; that stretch reads NDVQSWEKE. Residues 328-728 are prenyltransferase; the sequence is EMMVARMKYG…FRFLLSLLKV (401 aa). A compositionally biased stretch (basic and acidic residues) spans 352 to 363; the sequence is ENRGTKRTHQDD. The interval 352-379 is disordered; that stretch reads ENRGTKRTHQDDTEGVQSVKRFNGASTK. Repeat copies occupy residues 381-386, 387-392, and 393-398. The tract at residues 381–398 is 3 X 6 AA approximate tandem repeats; it reads GINGTNGINGLNGINGSN. Residues K447, R450, and H479 each coordinate isopentenyl diphosphate. 2 residues coordinate Mg(2+): D486 and D490. A DDXXD 2 motif is present at residues 486–490; that stretch reads DDVQD. R495 provides a ligand contact to dimethylallyl diphosphate. Isopentenyl diphosphate is bound at residue R496. Dimethylallyl diphosphate contacts are provided by K574, T575, Q610, N617, K627, and K637.

In the N-terminal section; belongs to the terpene synthase family. This sequence in the C-terminal section; belongs to the FPP/GGPP synthase family. In terms of assembly, hexamer. Mg(2+) is required as a cofactor.

It carries out the reaction isopentenyl diphosphate + (2E,6E)-farnesyl diphosphate = (2E,6E,10E)-geranylgeranyl diphosphate + diphosphate. Its pathway is secondary metabolite biosynthesis; terpenoid biosynthesis. Bifunctional terpene synthase; part of the gene cluster that mediates the biosynthesis of the diterpene methyl phomopsenonate. At first, the universal precursor of diterpene, geranylgeranyl diphosphate (GGPP) is provided and is cyclized by the unusual bifunctional terpene synthase PaPS to give phomopsene. The C-terminal prenyltransferase domain of PaPS catalyzes formation of GGPP, whereas the N-terminal terpene cyclase domain catalyzes the cyclization of GGPP to phomopsene. Since the oxidation of a methylgroup to a carboxyl group is frequently catalyzed by a cytochrome P450 monooxygenase, the C-16 methyl group would be oxidized by the cluster-specific cytochrome P450 monooxygenase ORF3. Subsequently, oxidation of the allylic position and methylation of the carboxyl group may give methyl phomopsenonate. Although further study is necessary to identify genes such as a monooxygenase and a methyltransferase, the predicted functions of genes on the cluster are correlated with the structure of methyl phomopsenonate. The protein is Phomopsene synthase of Phomopsis amygdali (Fusicoccum amygdali).